The chain runs to 128 residues: Small ribosomal subunit protein eS8 (128 aa).

The disordered stretch occupies residues 1–41 (MSYYQGNDSRKITGGQKGKNRDKRKYELGSPPTETKISDKD).

This sequence belongs to the eukaryotic ribosomal protein eS8 family. Part of the 30S ribosomal subunit.

The polypeptide is Small ribosomal subunit protein eS8 (Sulfolobus acidocaldarius (strain ATCC 33909 / DSM 639 / JCM 8929 / NBRC 15157 / NCIMB 11770)).